The primary structure comprises 209 residues: Small ribosomal subunit protein uS4 (209 aa).

The segment covering 1-13 has biased composition (basic residues); the sequence is MSTKSRTRSKTRL. 2 disordered regions span residues 1–20 and 28–49; these read MSTKSRTRSKTRLSRALGIP and YLEKRPYAPGEHGRSKRKQDSD. The region spanning 95–160 is the S4 RNA-binding domain; the sequence is QRLDALVVRS…TEPFQVAAAG (66 aa).

This sequence belongs to the universal ribosomal protein uS4 family. In terms of assembly, part of the 30S ribosomal subunit. Contacts protein S5. The interaction surface between S4 and S5 is involved in control of translational fidelity.

In terms of biological role, one of the primary rRNA binding proteins, it binds directly to 16S rRNA where it nucleates assembly of the body of the 30S subunit. Functionally, with S5 and S12 plays an important role in translational accuracy. The sequence is that of Small ribosomal subunit protein uS4 from Clavibacter sepedonicus (Clavibacter michiganensis subsp. sepedonicus).